The primary structure comprises 647 residues: MNTGLEISILHNLEMSKLLDTINSPSDLKKLSLDELRELAVQIREELVNRVTLNGGHLASSLGVVELTIALHRVFESPKDKIIWDVGHQSYAHKLLTGRREQFATLRQHGGLSGFTCRDESPHDPFGAGHASTSISAGLGMAVARDLAKEDYSVISVIGDGAISGGMSFEAINNAGHLHTKFIVILNDNGMAISPSTGALSKFLNNVRFDPRFEFAKRNAKQTITNMPFGKAVWAFTKSIKRKFEKSMLPGSLWEELGFIYLGPVDGHNIRELEAALKRAKDFESKPVLIHMITKKGKGYDDAEADAVKYHGISPKSGGLKSSHGLSYSQVFGQTLHKIMSQNPQVVAITAAMTDGCGLGEIAAAFPDRVFDVGICEQHAVTFAAGMATQGYIPVVVIYSTFLQRGFDQIIHDVCLQKLPVVFAIDRGGIVGDDGKTHQGIFDLSFMSLIPDMVVSAPSDENDLQHLIYTAVNSGKPFALRYPRGFGEGAEIESSLHNIPIGQNEILVNGSDVAILATGKSVAFAKDALEILTESGIKPTLVNNRYISPLDSELVLKIAQSHKYLVTVEENVISGGLGSRINTLLAEAGLVNKIKIANIGIPDKFVEHGNQSLLRAKYGLDGKGIAQRVLSLVGNPNEMKHPQIICP.

Residues H88 and 129–131 (GHA) contribute to the thiamine diphosphate site. D160 is a Mg(2+) binding site. Residues 161–162 (GA), N189, Y300, and E377 contribute to the thiamine diphosphate site. N189 is a binding site for Mg(2+).

This sequence belongs to the transketolase family. DXPS subfamily. As to quaternary structure, homodimer. It depends on Mg(2+) as a cofactor. Thiamine diphosphate serves as cofactor.

The enzyme catalyses D-glyceraldehyde 3-phosphate + pyruvate + H(+) = 1-deoxy-D-xylulose 5-phosphate + CO2. It participates in metabolic intermediate biosynthesis; 1-deoxy-D-xylulose 5-phosphate biosynthesis; 1-deoxy-D-xylulose 5-phosphate from D-glyceraldehyde 3-phosphate and pyruvate: step 1/1. In terms of biological role, catalyzes the acyloin condensation reaction between C atoms 2 and 3 of pyruvate and glyceraldehyde 3-phosphate to yield 1-deoxy-D-xylulose-5-phosphate (DXP). This Dehalococcoides mccartyi (strain CBDB1) protein is 1-deoxy-D-xylulose-5-phosphate synthase.